Reading from the N-terminus, the 324-residue chain is Short-chain dehydrogenase/reductase iacJ (324 aa).

I42, K66, D93, N120, Y204, K208, and T239 together coordinate NADP(+). Y204 acts as the Proton donor in catalysis. Residue K208 is the Lowers pKa of active site Tyr of the active site.

It belongs to the short-chain dehydrogenases/reductases (SDR) family.

The protein operates within secondary metabolite biosynthesis. Its function is as follows. Short-chain dehydrogenase/reductase; part of the gene cluster that mediates the biosynthesis of iso-A82775C, a enylepoxycyclohexane and biosynthetic precursor of the chloropestolide anticancer natural products. Within the cluster, the prenyltransferase iacE prenylates siccayne to generate pestalodiol E, using dimethylallyl diphosphate (DMAPP) as cosubstrate. The probable oxidoreductase iacF is then involved in the epoxidation of pestalodiol F to pestalodiol F, which is further converted to pestalofone A by the short-chain dehydrogenase/reductase iacG. Iso-A82775C is subsequently generated from pestalofone A by the short-chain dehydrogenase/reductase iacC. Iso-A82775C is further condensed with maldoxin via a Diels-Alder reaction to produce the anticancer natural products chloropestolides A to E. In Pestalotiopsis fici (strain W106-1 / CGMCC3.15140), this protein is Short-chain dehydrogenase/reductase iacJ.